A 174-amino-acid polypeptide reads, in one-letter code: Peptide methionine sulfoxide reductase MsrA (174 aa).

Cys11 is an active-site residue.

The protein belongs to the MsrA Met sulfoxide reductase family.

It carries out the reaction L-methionyl-[protein] + [thioredoxin]-disulfide + H2O = L-methionyl-(S)-S-oxide-[protein] + [thioredoxin]-dithiol. The catalysed reaction is [thioredoxin]-disulfide + L-methionine + H2O = L-methionine (S)-S-oxide + [thioredoxin]-dithiol. Has an important function as a repair enzyme for proteins that have been inactivated by oxidation. Catalyzes the reversible oxidation-reduction of methionine sulfoxide in proteins to methionine. The polypeptide is Peptide methionine sulfoxide reductase MsrA (Pasteurella multocida (strain Pm70)).